The sequence spans 693 residues: Polyphosphate kinase (693 aa).

Asn57 is an ATP binding site. Arg383 and Arg413 together coordinate Mg(2+). His443 acts as the Phosphohistidine intermediate in catalysis. Tyr476, Arg572, and His601 together coordinate ATP.

This sequence belongs to the polyphosphate kinase 1 (PPK1) family. Requires Mg(2+) as cofactor. Post-translationally, an intermediate of this reaction is the autophosphorylated ppk in which a phosphate is covalently linked to a histidine residue through a N-P bond.

The enzyme catalyses [phosphate](n) + ATP = [phosphate](n+1) + ADP. Catalyzes the reversible transfer of the terminal phosphate of ATP to form a long-chain polyphosphate (polyP). In Acinetobacter baumannii (strain ATCC 17978 / DSM 105126 / CIP 53.77 / LMG 1025 / NCDC KC755 / 5377), this protein is Polyphosphate kinase.